We begin with the raw amino-acid sequence, 337 residues long: F420-dependent glucose-6-phosphate dehydrogenase (337 aa).

A coenzyme F420-(gamma-Glu)n-binding site is contributed by aspartate 44. Histidine 45 serves as the catalytic Proton donor. Coenzyme F420-(gamma-Glu)n is bound by residues threonine 81 and 112 to 113; that span reads TG. Glutamate 114 functions as the Proton acceptor in the catalytic mechanism. Coenzyme F420-(gamma-Glu)n is bound by residues asparagine 117, 180–181, and 183–184; these read GG and GV. Substrate contacts are provided by threonine 198, lysine 201, lysine 262, and arginine 286.

It belongs to the F420-dependent glucose-6-phosphate dehydrogenase family. As to quaternary structure, homodimer.

It carries out the reaction oxidized coenzyme F420-(gamma-L-Glu)(n) + D-glucose 6-phosphate + H(+) = 6-phospho-D-glucono-1,5-lactone + reduced coenzyme F420-(gamma-L-Glu)(n). Functionally, catalyzes the coenzyme F420-dependent oxidation of glucose 6-phosphate (G6P) to 6-phosphogluconolactone. This chain is F420-dependent glucose-6-phosphate dehydrogenase, found in Kineococcus radiotolerans (strain ATCC BAA-149 / DSM 14245 / SRS30216).